The following is a 384-amino-acid chain: MATASARWNHVWVGTETGILKGVNLQRKHAANFTPSGQPRREEAVNALCWGTGGETQILVGCADRTVRYFNAEEGTFLSQRYCPGGEGTFRGLAQADGTLITCVDSGILRVWCENDKEASSDPLLELKVGPGVCRMRQDPTHTHVVATCGKENALKVWDLQGSEEPVFRAKNVRNDWLDLRVPIWDQDTQFLPGSQKLVTCTGYHQVRVYDPVSPQRRPVLEATYGEYPLTAMTLTPEGNSVIVGNTHGQLAEIDFRQGRLLGCLKGLAGSVRGLQCHPSKPLLASCGLDRVLRIHRIRNPRGLEHKVYLKSQLNCLLLSGRDNWEDEPQEPQEPNQVPSEDTETDELWASLEAAAKRKLPDLDQTQGALQRRKKKKRPGSTSP.

WD repeat units follow at residues 40-80 (RREE…FLSQ), 83-122 (CPGG…ASSD), 128-168 (KVGP…EPVF), 179-220 (DLRV…RRPV), 224-266 (TYGE…GCLK), and 267-306 (GLAG…GLEH). S214 carries the post-translational modification Phosphoserine. Position 311 is an N6-methyllysine (K311). The segment at 320–384 (SGRDNWEDEP…KKKRPGSTSP (65 aa)) is required for nucleolar and nuclear location. The interval 323–384 (DNWEDEPQEP…KKKRPGSTSP (62 aa)) is disordered. Residues 371 to 384 (QRRKKKKRPGSTSP) show a composition bias toward basic residues.

As to quaternary structure, isoform 1 interacts (through WDR repeats) with NVL; the interaction is independent of RNA or pre-60S ribosome particles. Isoform 2 does not interact with NVL. Interacts with MTREX; the interaction dissociation in a late stage of rRNA synthesis is required for appropriate maturation of pre-60S particles and depends on the ATPase activity of NVL.

Its subcellular location is the nucleus. It localises to the nucleolus. In terms of biological role, regulatory protein of the MTREX-exosome complex involved in the synthesis of the 60S ribosomal subunit. Participates in an early cleavage of the pre-rRNA processing pathway in cooperation with NVL. Required for blastocyst formation, is necessary for RNA transcription, processing and/or stability during preimplantation development. The sequence is that of WD repeat-containing protein 74 (Wdr74) from Mus musculus (Mouse).